Consider the following 89-residue polypeptide: Small ribosomal subunit protein uS17 (89 aa).

This sequence belongs to the universal ribosomal protein uS17 family. As to quaternary structure, part of the 30S ribosomal subunit.

In terms of biological role, one of the primary rRNA binding proteins, it binds specifically to the 5'-end of 16S ribosomal RNA. The polypeptide is Small ribosomal subunit protein uS17 (Delftia acidovorans (strain DSM 14801 / SPH-1)).